A 169-amino-acid chain; its full sequence is Cell division inhibitor SulA (169 aa).

The segment at 106–112 (ALRTGNY) is ftsZ binding. Residues 162 to 169 (KIHSNLYH) form a lon protease binding region.

It belongs to the SulA family. In terms of assembly, interacts with FtsZ. Is rapidly cleaved and degraded by the Lon protease once DNA damage is repaired.

In terms of biological role, component of the SOS system and an inhibitor of cell division. Accumulation of SulA causes rapid cessation of cell division and the appearance of long, non-septate filaments. In the presence of GTP, binds a polymerization-competent form of FtsZ in a 1:1 ratio, thus inhibiting FtsZ polymerization and therefore preventing it from participating in the assembly of the Z ring. This mechanism prevents the premature segregation of damaged DNA to daughter cells during cell division. The polypeptide is Cell division inhibitor SulA (Salmonella arizonae (strain ATCC BAA-731 / CDC346-86 / RSK2980)).